We begin with the raw amino-acid sequence, 297 residues long: Bifunctional protein FolD (297 aa).

NADP(+) contacts are provided by residues 168–170 (GRG), threonine 195, and valine 236.

Belongs to the tetrahydrofolate dehydrogenase/cyclohydrolase family. Homodimer.

It catalyses the reaction (6R)-5,10-methylene-5,6,7,8-tetrahydrofolate + NADP(+) = (6R)-5,10-methenyltetrahydrofolate + NADPH. The catalysed reaction is (6R)-5,10-methenyltetrahydrofolate + H2O = (6R)-10-formyltetrahydrofolate + H(+). It functions in the pathway one-carbon metabolism; tetrahydrofolate interconversion. Catalyzes the oxidation of 5,10-methylenetetrahydrofolate to 5,10-methenyltetrahydrofolate and then the hydrolysis of 5,10-methenyltetrahydrofolate to 10-formyltetrahydrofolate. This chain is Bifunctional protein FolD, found in Bifidobacterium animalis subsp. lactis (strain AD011).